Reading from the N-terminus, the 152-residue chain is MAKMHTKRKGKSSSTRPIRTEPPEWCKIGAEEVTTITLDLWKQGVSTAEIGMTLRDRYGVPDAKLITGKKITTILKENNVYPNVPEDLTNLIVKALRLRKHLSVNKKDVHNKRALNLTESKIRRLVKYYQQEKVLPRDWFYKPETAEMMITR.

A compositionally biased stretch (basic residues) spans 1–11 (MAKMHTKRKGK). The disordered stretch occupies residues 1–22 (MAKMHTKRKGKSSSTRPIRTEP).

This sequence belongs to the universal ribosomal protein uS15 family. In terms of assembly, part of the 30S ribosomal subunit.

This chain is Small ribosomal subunit protein uS15, found in Methanosarcina barkeri (strain Fusaro / DSM 804).